The sequence spans 105 residues: Small ribosomal subunit protein eS24 (105 aa).

Belongs to the eukaryotic ribosomal protein eS24 family.

This is Small ribosomal subunit protein eS24 from Haloquadratum walsbyi (strain DSM 16790 / HBSQ001).